The sequence spans 279 residues: MPELPEVETLKNSLKDKLIGLIVENVELKRDNLRYKLSPLLATEILNTNILDVRRRAKYLIIDFNNDYSLIVHLGMSGRFTLQSANYKTQKHDHVIFDLSNGEKLIFNDTRRFGMIYSFKTDLLEQEFFNDLGIEPFSDLLTLEYLKDKLQTRKRPIKNLIMDNRVIVGVGNIYASESLHLARIHPDKSGSDLRDDEIENLIKSIRDVLTKAITAGGTTLKDFVNGDNKPGYFTQQLTVYGKEGQSCLSCSSTIIKTKHSGRSTFYCKTCQYRLASFTI.

Residue Pro2 is the Schiff-base intermediate with DNA of the active site. The active-site Proton donor is Glu3. Lys58 acts as the Proton donor; for beta-elimination activity in catalysis. DNA is bound by residues His92, Arg111, and Arg153. An FPG-type zinc finger spans residues 238-272; the sequence is TVYGKEGQSCLSCSSTIIKTKHSGRSTFYCKTCQY. Arg262 acts as the Proton donor; for delta-elimination activity in catalysis.

Belongs to the FPG family. In terms of assembly, monomer. It depends on Zn(2+) as a cofactor.

The enzyme catalyses Hydrolysis of DNA containing ring-opened 7-methylguanine residues, releasing 2,6-diamino-4-hydroxy-5-(N-methyl)formamidopyrimidine.. It catalyses the reaction 2'-deoxyribonucleotide-(2'-deoxyribose 5'-phosphate)-2'-deoxyribonucleotide-DNA = a 3'-end 2'-deoxyribonucleotide-(2,3-dehydro-2,3-deoxyribose 5'-phosphate)-DNA + a 5'-end 5'-phospho-2'-deoxyribonucleoside-DNA + H(+). Functionally, involved in base excision repair of DNA damaged by oxidation or by mutagenic agents. Acts as a DNA glycosylase that recognizes and removes damaged bases. Has a preference for oxidized purines, such as 7,8-dihydro-8-oxoguanine (8-oxoG). Has AP (apurinic/apyrimidinic) lyase activity and introduces nicks in the DNA strand. Cleaves the DNA backbone by beta-delta elimination to generate a single-strand break at the site of the removed base with both 3'- and 5'-phosphates. In Rickettsia massiliae (strain Mtu5), this protein is Formamidopyrimidine-DNA glycosylase.